A 1081-amino-acid chain; its full sequence is Serine/threonine-protein kinase PKH2 (1081 aa).

The residue at position 138 (Ser138) is a Phosphoserine. A Protein kinase domain is found at 179-443 (FKFGSVIGDG…ISQIKEHHFF (265 aa)). ATP-binding positions include 189–191 (AYS) and Lys208. The interval 210 to 255 (LNKEYLIRQKKVKYVSIEKTALQKLNNSPSVVRLFSTFQDESSLYF) is PIF-pocket. ATP contacts are provided by residues 258-260 (EYA) and Asp264. Asp303 acts as the Proton acceptor in catalysis. Residues Glu307 and Asp321 each coordinate ATP. Residues 494 to 526 (HLVTQRSASSPSVEETTHSTLYNNNTHASTESE) are compositionally biased toward polar residues. 3 disordered regions span residues 494-652 (HLVT…TYQM), 805-833 (NRSG…NKGS), and 970-1017 (IERR…INSA). The segment covering 527 to 538 (ISIKKRPTDERT) has biased composition (basic and acidic residues). 2 stretches are compositionally biased toward low complexity: residues 564-575 (AASAALAASAAL) and 582-602 (SYPT…TSRP). Ser619 is subject to Phosphoserine. The segment covering 632-645 (PMPPYTPPMSPPMT) has biased composition (pro residues). 2 stretches are compositionally biased toward polar residues: residues 805 to 819 (NRSG…NSSP) and 998 to 1017 (HSQS…INSA). Ser1009 bears the Phosphoserine mark.

Belongs to the protein kinase superfamily. AGC Ser/Thr protein kinase family. PDPK1 subfamily.

The protein resides in the nucleus. Its subcellular location is the cytoplasm. It is found in the cell cortex. The enzyme catalyses L-seryl-[protein] + ATP = O-phospho-L-seryl-[protein] + ADP + H(+). It carries out the reaction L-threonyl-[protein] + ATP = O-phospho-L-threonyl-[protein] + ADP + H(+). Sphingoid base activates kinase activity. In terms of biological role, serine/threonine-protein kinase which is part sphingolipid-mediated signaling pathway that is required for the internalization step of endocytosis by regulating eisosome assembly and organization, and modulating the organization of the plasma membrane. Phosphorylates and activates PKC1. Activates YPK1 and YPK2, 2 components of signaling cascade required for maintenance of cell wall integrity. Required for stress-induced P-body assembly and regulates global mRNA decay at the deadenylation step. The chain is Serine/threonine-protein kinase PKH2 (PKH2) from Saccharomyces cerevisiae (strain ATCC 204508 / S288c) (Baker's yeast).